Reading from the N-terminus, the 251-residue chain is uncharacterized protein (251 aa).

This is an uncharacterized protein from Haemophilus influenzae (strain ATCC 51907 / DSM 11121 / KW20 / Rd).